The sequence spans 343 residues: Aspartate beta-hydroxylase domain-containing protein 2 (343 aa).

The Cytoplasmic portion of the chain corresponds to M1–D31. A helical transmembrane segment spans residues G32–V52. Topologically, residues G53–R343 are lumenal. Residues N77 and N185 are each glycosylated (N-linked (GlcNAc...) asparagine). Residues W202 and S246 each contribute to the 2-oxoglutarate site. H257 serves as a coordination point for Fe cation. R266–H268 contributes to the 2-oxoglutarate binding site. A Fe cation-binding site is contributed by H302. Residue R315 coordinates 2-oxoglutarate.

This sequence belongs to the aspartyl/asparaginyl beta-hydroxylase family. The cofactor is Fe cation.

The protein resides in the membrane. Functionally, may function as 2-oxoglutarate-dependent dioxygenase. The chain is Aspartate beta-hydroxylase domain-containing protein 2 (Asphd2) from Mus musculus (Mouse).